A 575-amino-acid polypeptide reads, in one-letter code: Protein AUXIN SIGNALING F-BOX 2 (575 aa).

Residues 1 to 47 (MNYFPDEVIEHVFDFVTSHKDRNAISLVCKSWYKIERYSRQKVFIGN) form the F-box domain. K69 is a 1D-myo-inositol hexakisphosphate binding site. The interaction with auxin-responsive proteins stretch occupies residues 76–77 (DF). Residues 108–109 (KR) and R340 each bind 1D-myo-inositol hexakisphosphate. The interval 343-348 (PSDLLG) is interaction with auxin-responsive proteins. 396-398 (RFR) is a 1D-myo-inositol hexakisphosphate binding site. Residues 400–404 (CILEP) form an interaction with auxin-responsive proteins region. 1D-myo-inositol hexakisphosphate is bound at residue R431. The segment at 459 to 460 (AF) is interaction with auxin-responsive proteins. 1D-myo-inositol hexakisphosphate contacts are provided by residues 479–480 (KK) and R504.

As to quaternary structure, part of a SCF (SKP1-cullin-F-box) protein ligase complex. Interacts with Aux/IAA proteins (IAA7) in an auxin-dependent manner. In terms of tissue distribution, ubiquitous, with higher levels in seedlings.

Its subcellular location is the nucleus. It functions in the pathway protein modification; protein ubiquitination. In terms of biological role, component of SCF(ASK-cullin-F-box) E3 ubiquitin ligase complexes, which may mediate the ubiquitination and subsequent proteasomal degradation of target proteins. Confers sensitivity to the virulent bacterial pathogen P.syringae. Auxin receptor that mediates Aux/IAA proteins proteasomal degradation and auxin-regulated transcription. Involved in embryogenesis regulation by auxin. This is Protein AUXIN SIGNALING F-BOX 2 (AFB2) from Arabidopsis thaliana (Mouse-ear cress).